The chain runs to 212 residues: NAD(P)H-hydrate epimerase (212 aa).

The 202-residue stretch at 11-212 (MRHYDSYTIN…ANDMGTYAVD (202 aa)) folds into the YjeF N-terminal domain. Residue 60-64 (NNGGD) coordinates (6S)-NADPHX. The K(+) site is built by Asn61 and Asp123. (6S)-NADPHX is bound by residues 127–133 (GIGIDRA), Tyr138, and Asp156. Ser159 contacts K(+).

The protein belongs to the NnrE/AIBP family. It depends on K(+) as a cofactor.

It carries out the reaction (6R)-NADHX = (6S)-NADHX. It catalyses the reaction (6R)-NADPHX = (6S)-NADPHX. Its function is as follows. Catalyzes the epimerization of the S- and R-forms of NAD(P)HX, a damaged form of NAD(P)H that is a result of enzymatic or heat-dependent hydration. This is a prerequisite for the S-specific NAD(P)H-hydrate dehydratase to allow the repair of both epimers of NAD(P)HX. The sequence is that of NAD(P)H-hydrate epimerase from Limosilactobacillus reuteri (strain ATCC 55730 / SD2112) (Lactobacillus reuteri).